Consider the following 248-residue polypeptide: Mannose-binding protein C (248 aa).

An N-terminal signal peptide occupies residues 1 to 20 (MSLFPSLTLLLLSVVATSYS). The region spanning 42-99 (GINGFPGKDGRDGTKGEKGEPGQGLRGLQGPPGKLGPPGNPGSSGSPGPKGQKGDPGE) is the Collagen-like domain. Residues 43–111 (INGFPGKDGR…DCESSLAASE (69 aa)) are disordered. P47 bears the 4-hydroxyproline mark. A compositionally biased stretch (basic and acidic residues) spans 49–61 (KDGRDGTKGEKGE). 4-hydroxyproline occurs at positions 73, 79, 82, and 88. Positions 82–91 (PGSSGSPGPK) are enriched in low complexity. A coiled-coil region spans residues 112-130 (RKALQTEMARIKKWLTFSL). The region spanning 134-245 (VGNKFFLTNG…CSSSHLALCE (112 aa)) is the C-type lectin domain. 2 cysteine pairs are disulfide-bonded: C155-C244 and C222-C236.

Oligomeric complex of 3 or more homotrimers. Interacts with MASP1 and MASP2. Interacts with MEP1A and MEP1B and may inhibit their catalytic activity. In terms of processing, hydroxylation on proline residues within the sequence motif, GXPG, is most likely to be 4-hydroxy as this fits the requirement for 4-hydroxylation in vertebrates.

The protein resides in the secreted. In terms of biological role, calcium-dependent lectin involved in innate immune defense. Binds mannose, fucose and N-acetylglucosamine on different microorganisms and activates the lectin complement pathway. Binds to late apoptotic cells, as well as to apoptotic blebs and to necrotic cells, but not to early apoptotic cells, facilitating their uptake by macrophages. In Macaca fascicularis (Crab-eating macaque), this protein is Mannose-binding protein C (MBL2).